A 98-amino-acid chain; its full sequence is NADH-ubiquinone oxidoreductase chain 4L (98 aa).

Helical transmembrane passes span 1-21 (MIPT…GMLI), 29-49 (SLLC…LIAL), and 61-81 (IILL…LVSI).

It belongs to the complex I subunit 4L family. As to quaternary structure, core subunit of respiratory chain NADH dehydrogenase (Complex I) which is composed of 45 different subunits.

Its subcellular location is the mitochondrion inner membrane. It catalyses the reaction a ubiquinone + NADH + 5 H(+)(in) = a ubiquinol + NAD(+) + 4 H(+)(out). Its function is as follows. Core subunit of the mitochondrial membrane respiratory chain NADH dehydrogenase (Complex I) which catalyzes electron transfer from NADH through the respiratory chain, using ubiquinone as an electron acceptor. Part of the enzyme membrane arm which is embedded in the lipid bilayer and involved in proton translocation. The chain is NADH-ubiquinone oxidoreductase chain 4L (MT-ND4L) from Macaca ochreata (Booted macaque).